The following is a 307-amino-acid chain: Mitochondrial brown fat uncoupling protein 1 (307 aa).

At 2 to 10 (VNPTTSEVH) the chain is on the mitochondrial intermembrane side. A helical transmembrane segment spans residues 11–32 (PTMGVKIFSAGVAACLADIITF). Solcar repeat units lie at residues 11-102 (PTMG…VQEY), 111-201 (PTLG…MKGA), and 210-295 (DDVP…LKKE). The Mitochondrial matrix portion of the chain corresponds to 33–73 (PLDTAKVRLQIQGEGQISSTIRYKGVLGTITTLAKTEGLPK). Residue Lys56 participates in fatty acid 16:0 binding. A helical membrane pass occupies residues 74 to 96 (LYSGLPAGIQRQISFASLRIGLY). The Mitochondrial intermembrane segment spans residues 97–116 (DTVQEYFSSGKETPPTLGNR). The helical transmembrane segment at 117–133 (ISAGLMTGGVAVFIGQP) threads the bilayer. The Mitochondrial matrix segment spans residues 134 to 178 (TEVVKVRLQAQSHLHGIKPRYTGTYNAYRIIATTESFSTLWKGTT). A helical membrane pass occupies residues 179 to 195 (PNLLRNVIINCVELVTY). Over 196–212 (DLMKGALVNNQILADDV) the chain is Mitochondrial intermembrane. Residues 213 to 232 (PCHLLSAFVAGFCTTFLASP) traverse the membrane as a helical segment. Residues 233-266 (ADVVKTRFINSLPGQYPSVPSCAMTMLTKEGPTA) lie on the Mitochondrial matrix side of the membrane. Cys254 carries the cysteine sulfenic acid (-SOH) modification. A helical transmembrane segment spans residues 267-289 (FFKGFVPSFLRLASWNVIMFVCF). Lys269 lines the fatty acid 16:0 pocket. Over 290-307 (EQLKKELSKSRQTVDCTT) the chain is Mitochondrial intermembrane.

It belongs to the mitochondrial carrier (TC 2.A.29) family. As to quaternary structure, most probably functions as a monomer. Binds one purine nucleotide per monomer. However, has also been suggested to function as a homodimer or a homotetramer. Tightly associates with cardiolipin in the mitochondrion inner membrane; may stabilize and regulate its activity. In terms of processing, may undergo sulfenylation upon cold exposure. May increase the sensitivity of UCP1 thermogenic function to the activation by noradrenaline probably through structural effects. May undergo ubiquitin-mediated proteasomal degradation. Brown adipose tissue.

The protein resides in the mitochondrion inner membrane. It carries out the reaction H(+)(in) = H(+)(out). With respect to regulation, has no constitutive proton transporter activity and has to be activated by long-chain fatty acids/LCFAs. Inhibited by purine nucleotides. Both purine nucleotides and LCFAs bind the cytosolic side of the transporter and directly compete to activate or inhibit it. Activated by noradrenaline and reactive oxygen species. Despite lacking canonical translational encoding for selenocysteine, a small pool of the protein has been observed to selectively incorporate selenocysteine at 'Cys-254'. Selenocysteine-modified protein is highly sensitive to redox modification and may constitute a pool of protein highly sensitive to activation by elevated levels of reactive oxygen species (ROS). Functionally, mitochondrial protein responsible for thermogenic respiration, a specialized capacity of brown adipose tissue and beige fat that participates in non-shivering adaptive thermogenesis to temperature and diet variations and more generally to the regulation of energy balance. Functions as a long-chain fatty acid/LCFA and proton symporter, simultaneously transporting one LCFA and one proton through the inner mitochondrial membrane. However, LCFAs remaining associated with the transporter via their hydrophobic tails, it results in an apparent transport of protons activated by LCFAs. Thereby, dissipates the mitochondrial proton gradient and converts the energy of substrate oxydation into heat instead of ATP. Regulates the production of reactive oxygen species/ROS by mitochondria. In Mesocricetus auratus (Golden hamster), this protein is Mitochondrial brown fat uncoupling protein 1.